Consider the following 211-residue polypeptide: Redox-sensing transcriptional repressor Rex (211 aa).

Residues 18-57 constitute a DNA-binding region (H-T-H motif); the sequence is LYYRFLENLHASGKQRVSSSELSEAVKVDSATIRRDFSYF. 92–97 contributes to the NAD(+) binding site; sequence GVGNLG.

This sequence belongs to the transcriptional regulatory Rex family. As to quaternary structure, homodimer.

Its subcellular location is the cytoplasm. Modulates transcription in response to changes in cellular NADH/NAD(+) redox state. This is Redox-sensing transcriptional repressor Rex from Halalkalibacterium halodurans (strain ATCC BAA-125 / DSM 18197 / FERM 7344 / JCM 9153 / C-125) (Bacillus halodurans).